The sequence spans 280 residues: Myelin proteolipid protein A (280 aa).

The Cytoplasmic portion of the chain corresponds to 1–10 (MGWHDGCIRC). S-palmitoyl cysteine attachment occurs at residues cysteine 7 and cysteine 10. A helical membrane pass occupies residues 11 to 36 (MVGVPFASVIATVLCFAGVALFCGCG). The Extracellular segment spans residues 37–59 (HEALSGTEKLIETYFSKNYQEYE). Residues 60 to 88 (YLIHVINAFQYVIYGIAIFFFLFGILLLA) traverse the membrane as a helical segment. Residues 89–152 (EGFYTTTAIK…LGKWLGHPDK (64 aa)) are Cytoplasmic-facing. Residues cysteine 140 and cysteine 142 are each lipidated (S-palmitoyl cysteine). A helical membrane pass occupies residues 153–179 (FVGVTYIITILWILIFACSAVPVYIYF). The Extracellular segment spans residues 180 to 239 (NTWVTCQSIAFPGKTTTSVSTLCSDARMYGVLPWNAFPGKVCGTSLLAICKTSEFQMTFH). Cystine bridges form between cysteine 185-cysteine 229 and cysteine 202-cysteine 221. Residues 240-269 (LFIAAFVGAAATLVALLTYMVGASFNYAVL) form a helical membrane-spanning segment. Topologically, residues 270–280 (RVTGRSDRSKF) are cytoplasmic.

This sequence belongs to the myelin proteolipid protein family.

It is found in the cell membrane. Its function is as follows. This is the major myelin protein from the central nervous system. It plays an important role in the formation or maintenance of the multilamellar structure of myelin. The protein is Myelin proteolipid protein A (plp1-a) of Xenopus laevis (African clawed frog).